Reading from the N-terminus, the 196-residue chain is ECF RNA polymerase sigma factor SigK (196 aa).

A sigma-70 factor domain-2 region spans residues 39-105 (YDQTRARVYG…RAVDRVRSEQ (67 aa)). The Polymerase core binding signature appears at 62 to 65 (ETTQ). The interval 142–191 (CLDSLTDVQRECIQLAYYDGLTYAQVADRLAANLATIKSRMRDGIRALRK) is sigma-70 factor domain-4. A DNA-binding region (H-T-H motif) is located at residues 164–183 (YAQVADRLAANLATIKSRMR).

It belongs to the sigma-70 factor family. ECF subfamily. As to quaternary structure, interacts transiently with the RNA polymerase catalytic core formed by RpoA, RpoB, RpoC and RpoZ (2 alpha, 1 beta, 1 beta' and 1 omega subunit) to form the RNA polymerase holoenzyme that can initiate transcription. Interacts (via sigma-70 factor domain 4) with anti-sigma-K factor RskA.

Sigma factors are initiation factors that promote the attachment of RNA polymerase to specific initiation sites and are then released. Extracytoplasmic function (ECF) sigma factors are held in an inactive form by an anti-sigma factor until released by regulated intramembrane proteolysis. The sequence is that of ECF RNA polymerase sigma factor SigK (sigK) from Mycolicibacterium vanbaalenii (strain DSM 7251 / JCM 13017 / BCRC 16820 / KCTC 9966 / NRRL B-24157 / PYR-1) (Mycobacterium vanbaalenii).